The primary structure comprises 107 residues: MLVTTTPIIEGKRIVKYYGIVSGETIIGANVFRDLFASIRDIVGGRSGAYEEVLRMAKDTALQEMQAQAAKLGANAVIGVDLDYETVGGSGSMLMVTANGTAVTIED.

It belongs to the UPF0145 family.

This is UPF0145 protein BT_3410 from Bacteroides thetaiotaomicron (strain ATCC 29148 / DSM 2079 / JCM 5827 / CCUG 10774 / NCTC 10582 / VPI-5482 / E50).